We begin with the raw amino-acid sequence, 330 residues long: Anthranilate phosphoribosyltransferase (330 aa).

5-phospho-alpha-D-ribose 1-diphosphate-binding positions include Gly77, 80–81 (GD), Thr85, 87–90 (NIST), 105–113 (KHGNKAVSS), and Ser117. An anthranilate-binding site is contributed by Gly77. Position 89 (Ser89) interacts with Mg(2+). Asn108 is a binding site for anthranilate. Residue Arg163 coordinates anthranilate. Residues Asp222 and Glu223 each contribute to the Mg(2+) site.

Belongs to the anthranilate phosphoribosyltransferase family. In terms of assembly, homodimer. It depends on Mg(2+) as a cofactor.

The catalysed reaction is N-(5-phospho-beta-D-ribosyl)anthranilate + diphosphate = 5-phospho-alpha-D-ribose 1-diphosphate + anthranilate. It participates in amino-acid biosynthesis; L-tryptophan biosynthesis; L-tryptophan from chorismate: step 2/5. Catalyzes the transfer of the phosphoribosyl group of 5-phosphorylribose-1-pyrophosphate (PRPP) to anthranilate to yield N-(5'-phosphoribosyl)-anthranilate (PRA). The polypeptide is Anthranilate phosphoribosyltransferase (Pelagibacter ubique (strain HTCC1062)).